The following is a 652-amino-acid chain: DNA ligase (652 aa).

NAD(+) contacts are provided by residues 29-33 (DSDYD), 78-79 (SL), and E107. The active-site N6-AMP-lysine intermediate is the K109. 4 residues coordinate NAD(+): R130, E164, K278, and K302. Positions 395, 398, 413, and 418 each coordinate Zn(2+). In terms of domain architecture, BRCT spans 577-652 (NSDAALFGLT…IEDEDWLRQL (76 aa)).

This sequence belongs to the NAD-dependent DNA ligase family. LigA subfamily. Mg(2+) is required as a cofactor. The cofactor is Mn(2+).

The catalysed reaction is NAD(+) + (deoxyribonucleotide)n-3'-hydroxyl + 5'-phospho-(deoxyribonucleotide)m = (deoxyribonucleotide)n+m + AMP + beta-nicotinamide D-nucleotide.. DNA ligase that catalyzes the formation of phosphodiester linkages between 5'-phosphoryl and 3'-hydroxyl groups in double-stranded DNA using NAD as a coenzyme and as the energy source for the reaction. It is essential for DNA replication and repair of damaged DNA. The chain is DNA ligase from Streptococcus pyogenes serotype M1.